The chain runs to 324 residues: GTP cyclohydrolase 1 (324 aa).

Disordered regions lie at residues 33–59 and 79–119; these read GRNN…NQAE and VPLA…TPGH. Positions 40 to 49 are enriched in low complexity; that stretch reads STSSTSGTSS. 2 stretches are compositionally biased toward polar residues: residues 50–59 and 93–117; these read LADRQQNQAE and TNGS…STTP. Zn(2+) contacts are provided by Cys214, His217, and Cys285.

This sequence belongs to the GTP cyclohydrolase I family. In terms of assembly, toroid-shaped homodecamer, composed of two pentamers of five dimers. As to expression, isoform B is expressed almost exclusively in adult heads.

The enzyme catalyses GTP + H2O = 7,8-dihydroneopterin 3'-triphosphate + formate + H(+). It functions in the pathway cofactor biosynthesis; 7,8-dihydroneopterin triphosphate biosynthesis; 7,8-dihydroneopterin triphosphate from GTP: step 1/1. Its function is as follows. Isoform B is required for eye pigment production, Isoform C may be required for normal embryonic development and segment pattern formation. The chain is GTP cyclohydrolase 1 (Pu) from Drosophila melanogaster (Fruit fly).